Here is a 315-residue protein sequence, read N- to C-terminus: Annexin Gh1 (315 aa).

Annexin repeat units follow at residues 10–81, 82–153, 165–236, and 240–311; these read PSVS…LWAL, DPAE…PLVS, TLAK…STVK, and YPEK…VLAG. Ca(2+) is bound by residues Phe23, Gly25, Gly27, and Glu67. Ca(2+) contacts are provided by Ile253, Arg255, Gly257, Val295, Asp297, Thr298, and Glu303.

Belongs to the annexin family. In terms of assembly, monomer. Trimer. Oligomerization is calcium-independent. Disassembly of the oligomers seems to be required for calcium-binding.

Its subcellular location is the membrane. Binds to phospholipid vesicles in a calcium-dependent manner in vitro. Prefers phosphatidyl-serine containing membranes. May have a role in the membrane cytoskeleton scaffolding or exocytotic processes. May be involved in oxidative stress response. This chain is Annexin Gh1, found in Gossypium hirsutum (Upland cotton).